The sequence spans 129 residues: Transcriptional regulator WhiB2 (129 aa).

A disordered region spans residues Ser-23–Leu-45. Positions Leu-66–Arg-123 constitute a 4Fe-4S Wbl-type domain. Residues Cys-67, Cys-90, Cys-93, and Cys-99 each coordinate [4Fe-4S] cluster.

It belongs to the WhiB family. Requires [4Fe-4S] cluster as cofactor. Post-translationally, the Fe-S cluster can be nitrosylated by nitric oxide (NO). In terms of processing, upon Fe-S cluster removal intramolecular disulfide bonds are formed.

It is found in the cytoplasm. Acts as a transcriptional regulator. Probably redox-responsive. The apo- but not holo-form probably binds DNA. This Mycolicibacterium smegmatis (strain ATCC 700084 / mc(2)155) (Mycobacterium smegmatis) protein is Transcriptional regulator WhiB2 (whiB2).